A 92-amino-acid polypeptide reads, in one-letter code: Signal recognition particle 19 kDa protein (92 aa).

This sequence belongs to the SRP19 family. Part of the signal recognition particle protein translocation system, which is composed of SRP and FtsY. Archaeal SRP consists of a 7S RNA molecule of 300 nucleotides and two protein subunits: SRP54 and SRP19.

It localises to the cytoplasm. Its function is as follows. Involved in targeting and insertion of nascent membrane proteins into the cytoplasmic membrane. Binds directly to 7S RNA and mediates binding of the 54 kDa subunit of the SRP. The protein is Signal recognition particle 19 kDa protein of Halorubrum lacusprofundi (strain ATCC 49239 / DSM 5036 / JCM 8891 / ACAM 34).